A 315-amino-acid chain; its full sequence is Olfactory receptor 3A1 (315 aa).

The Extracellular portion of the chain corresponds to 1–28 (MQPESGANGTVIAEFILLGLLEAPGLQP). N8 carries N-linked (GlcNAc...) asparagine glycosylation. Residues 29–52 (VVFVLFLFAYLVTVRGNLSILAAV) form a helical membrane-spanning segment. Over 53-60 (LVEPKLHT) the chain is Cytoplasmic. A helical membrane pass occupies residues 61 to 82 (PMYFFLGNLSVLDVGCISVTVP). The Extracellular portion of the chain corresponds to 83–103 (SMLSRLLSRKRAVPCGACLTQ). A disulfide bond links C100 and C192. Residues 104–123 (LFFFHLFVGVDCFLLTAMAY) form a helical membrane-spanning segment. The Cytoplasmic portion of the chain corresponds to 124 to 143 (DRFLAICRPLTYSTRMSQTV). A helical membrane pass occupies residues 144–161 (QRMLVAASWACAFTNALT). Topologically, residues 162–199 (HTVAMSTLNFCGPNVINHFYCDLPQLFQLSCSSTQLNE) are extracellular. A helical transmembrane segment spans residues 200–223 (LLLFAVGFIMAGTPMALIVISYIH). Topologically, residues 224–240 (VAAAVLRIRSVEGRKKA) are cytoplasmic. A helical membrane pass occupies residues 241-264 (FSTCGSHLTVVAIFYGSGIFNYMR). Topologically, residues 265 to 275 (LGSTKLSDKDK) are extracellular. A helical transmembrane segment spans residues 276–295 (AVGIFNTVINPMLNPIIYSF). The Cytoplasmic portion of the chain corresponds to 296–315 (RNPDVQSAIWRMLTGRRSLA).

It belongs to the G-protein coupled receptor 1 family.

The protein localises to the cell membrane. Its function is as follows. Odorant receptor. This is Olfactory receptor 3A1 (OR3A1) from Homo sapiens (Human).